The sequence spans 443 residues: Thymidine phosphorylase (443 aa).

It belongs to the thymidine/pyrimidine-nucleoside phosphorylase family. Homodimer.

The enzyme catalyses thymidine + phosphate = 2-deoxy-alpha-D-ribose 1-phosphate + thymine. It functions in the pathway pyrimidine metabolism; dTMP biosynthesis via salvage pathway; dTMP from thymine: step 1/2. Its function is as follows. The enzymes which catalyze the reversible phosphorolysis of pyrimidine nucleosides are involved in the degradation of these compounds and in their utilization as carbon and energy sources, or in the rescue of pyrimidine bases for nucleotide synthesis. The chain is Thymidine phosphorylase from Shewanella oneidensis (strain ATCC 700550 / JCM 31522 / CIP 106686 / LMG 19005 / NCIMB 14063 / MR-1).